A 562-amino-acid polypeptide reads, in one-letter code: Dihydroxy-acid dehydratase (562 aa).

Cysteine 55 serves as a coordination point for [2Fe-2S] cluster. Aspartate 87 serves as a coordination point for Mg(2+). Residue cysteine 128 participates in [2Fe-2S] cluster binding. Residues aspartate 129 and lysine 130 each contribute to the Mg(2+) site. At lysine 130 the chain carries N6-carboxylysine. [2Fe-2S] cluster is bound at residue cysteine 200. Glutamate 451 contributes to the Mg(2+) binding site. Catalysis depends on serine 477, which acts as the Proton acceptor.

It belongs to the IlvD/Edd family. As to quaternary structure, homodimer. Requires [2Fe-2S] cluster as cofactor. The cofactor is Mg(2+).

The catalysed reaction is (2R)-2,3-dihydroxy-3-methylbutanoate = 3-methyl-2-oxobutanoate + H2O. It catalyses the reaction (2R,3R)-2,3-dihydroxy-3-methylpentanoate = (S)-3-methyl-2-oxopentanoate + H2O. The protein operates within amino-acid biosynthesis; L-isoleucine biosynthesis; L-isoleucine from 2-oxobutanoate: step 3/4. It functions in the pathway amino-acid biosynthesis; L-valine biosynthesis; L-valine from pyruvate: step 3/4. Functionally, functions in the biosynthesis of branched-chain amino acids. Catalyzes the dehydration of (2R,3R)-2,3-dihydroxy-3-methylpentanoate (2,3-dihydroxy-3-methylvalerate) into 2-oxo-3-methylpentanoate (2-oxo-3-methylvalerate) and of (2R)-2,3-dihydroxy-3-methylbutanoate (2,3-dihydroxyisovalerate) into 2-oxo-3-methylbutanoate (2-oxoisovalerate), the penultimate precursor to L-isoleucine and L-valine, respectively. The polypeptide is Dihydroxy-acid dehydratase (Cytophaga hutchinsonii (strain ATCC 33406 / DSM 1761 / CIP 103989 / NBRC 15051 / NCIMB 9469 / D465)).